The sequence spans 1102 residues: WD repeat-containing protein 72 (1102 aa).

WD repeat units lie at residues 15–54 (APPHSITAIMITDDQRTIVTGSQEGQLCLWNLSHELKISA), 60–102 (GHSA…CMEK), 160–197 (NCMCIVHSMRIQEDSLLVVSVAGELKVWDLSSSINSIQ), 318–362 (KEQS…VSKF), 402–441 (AGTAVVTSSEYIPSLDKLICGCEDGTIIITQALNAAKARL), 459–504 (GHHQ…ILHK), 507–552 (LEAG…CLLH), and 555–594 (KHLFPVRMIKWHPVENFLIVGCADDSVYIWEIETGTLERH). Serine 1081 and serine 1083 each carry phosphoserine.

It localises to the cytoplasmic vesicle. Plays a major role in formation of tooth enamel. Specifically required during the maturation phase of amelogenesis for normal formation of the enamel matrix and clearance of enamel proteins. May be involved in localization of the calcium transporter SLC24A4 to the ameloblast cell membrane. This Homo sapiens (Human) protein is WD repeat-containing protein 72 (WDR72).